Reading from the N-terminus, the 401-residue chain is Riboflavin biosynthesis protein RibBA (401 aa).

The DHBP synthase stretch occupies residues 1-203; sequence MTDFQFSKVE…IQQLQEYRRK (203 aa). Residues 30–31, Asp-35, 142–146, and Glu-166 contribute to the D-ribulose 5-phosphate site; these read RE and RNGHT. Glu-31 provides a ligand contact to Mg(2+). His-145 contributes to the Mg(2+) binding site. Positions 204-401 are GTP cyclohydrolase II; the sequence is HDSLVKQISV…QIKMGHMFNF (198 aa). Residue 254-258 participates in GTP binding; the sequence is RIHSE. Zn(2+) is bound by residues Cys-259, Cys-270, and Cys-272. GTP contacts are provided by residues Gln-275, 297–299, and Thr-319; that span reads EGR. The active-site Proton acceptor; for GTP cyclohydrolase activity is Asp-331. The active-site Nucleophile; for GTP cyclohydrolase activity is the Arg-333. 2 residues coordinate GTP: Thr-354 and Lys-359.

It in the N-terminal section; belongs to the DHBP synthase family. In the C-terminal section; belongs to the GTP cyclohydrolase II family. The cofactor is Mg(2+). Mn(2+) serves as cofactor. Zn(2+) is required as a cofactor.

The enzyme catalyses D-ribulose 5-phosphate = (2S)-2-hydroxy-3-oxobutyl phosphate + formate + H(+). It catalyses the reaction GTP + 4 H2O = 2,5-diamino-6-hydroxy-4-(5-phosphoribosylamino)-pyrimidine + formate + 2 phosphate + 3 H(+). It functions in the pathway cofactor biosynthesis; riboflavin biosynthesis; 2-hydroxy-3-oxobutyl phosphate from D-ribulose 5-phosphate: step 1/1. It participates in cofactor biosynthesis; riboflavin biosynthesis; 5-amino-6-(D-ribitylamino)uracil from GTP: step 1/4. Catalyzes the conversion of D-ribulose 5-phosphate to formate and 3,4-dihydroxy-2-butanone 4-phosphate. In terms of biological role, catalyzes the conversion of GTP to 2,5-diamino-6-ribosylamino-4(3H)-pyrimidinone 5'-phosphate (DARP), formate and pyrophosphate. In Actinobacillus pleuropneumoniae serotype 7 (strain AP76), this protein is Riboflavin biosynthesis protein RibBA.